The chain runs to 310 residues: GTP-binding protein GTR1 (310 aa).

Ser-15, Gly-18, Lys-19, Ser-20, Ser-21, Thr-35, Thr-41, Gly-64, His-126, Asp-129, and Ile-166 together coordinate GTP.

The protein belongs to the GTR/RAG GTP-binding protein family. Heterodimer; with GTR2. Component of the GSE complex composed of GTR1, GTR2, SLM4, MEH1 and LTV1. Interacts with GTR2; the interaction is direct. Interacts with TOR1.

The protein resides in the vacuole membrane. The catalysed reaction is GTP + H2O = GDP + phosphate + H(+). Its function is as follows. GTPase involved in activation of the TORC1 signaling pathway, which promotes growth and represses autophagy in nutrient-rich conditions. Also required for TORC1 inactivation during nitrogen starvation. Required for intracellular sorting of GAP1 out of the endosome. Functionally associated with the inorganic phosphate transporter PHO84, and may be involved in regulating its function or localization. The sequence is that of GTP-binding protein GTR1 (GTR1) from Saccharomyces cerevisiae (strain ATCC 204508 / S288c) (Baker's yeast).